Reading from the N-terminus, the 717-residue chain is MASSSDSEDDSVMAVDQEETALEGTMEQDEDPHPVLEVEETRHNRSMSELPEEVLEYILSFLSPYQEHKTAALVCKQWYRLIKGVAHQCYHGFMKAVQEGNIQWESRTYPYPGTPITQRFSHSACYYDANQSMYVFGGCTQSSCNAAFNDLWRLDLNSKEWIRPLASGSYPSPKAGATLVVYKDLLVLFGGWTRPSPYPLHQPERFFDEIHTYSPSKNWWNCIVTTHGPPPMAGHSSCVIGDKMIVFGGSLGSRQMSNEVWVLDLEQWAWSKPNISGPSPHPRGGQSQIVIDDTTLLILGGCGGPNALFKDAWLLHMHPGPWAWQPLKVENEDHGAPELWCHPACRVGQCVVVFSQAPSGRAPLSPSLNSRPSPISATPPALVPETREYRSQSPVRSMDEAPCVNGRWGTLRPRAQRQTPSGSREGSLSPARGDGSPILNGGNLSPGTVAVGGASLDSPVQVVSPSTPSASDGYDLKVGLSLAPRRGSLPDQKDLRLSSIDLNWDLKSASSSSHVDSIDNRTVAGSVRHPPEQTNGVHTPPHVASALAGAVSPGALRRSLEAIKAMSSKGPSASAALSPPLGSSPSSPGSQSLSSGETVPNSRPGPAQGDGHSLPPIARRLGHHPPQSLNVGKPLYQSMNCKPMQMYVLDIKDTKEKGRVKWKVFTSSSVVGPPETSLHTVVQGRGELIVFGGLMDKKQNVKYYPKTNALYFVRAKR.

Acidic residues predominate over residues 1–30 (MASSSDSEDDSVMAVDQEETALEGTMEQDE). Residues 1–34 (MASSSDSEDDSVMAVDQEETALEGTMEQDEDPHP) form a disordered region. The F-box domain maps to 44 to 93 (NRSMSELPEEVLEYILSFLSPYQEHKTAALVCKQWYRLIKGVAHQCYHGF). Kelch repeat units lie at residues 132 to 184 (SMYV…VYKD), 186 to 242 (LVLF…VIGD), 244 to 293 (MIVF…VIDD), and 295 to 342 (TLLI…LWCH). The interval 361–452 (RAPLSPSLNS…NLSPGTVAVG (92 aa)) is disordered. Low complexity predominate over residues 363–376 (PLSPSLNSRPSPIS). 2 positions are modified to phosphoserine: S365 and S373. T378 bears the Phosphothreonine mark. Polar residues predominate over residues 416–426 (QRQTPSGSREG). A Phosphoserine modification is found at S552. A compositionally biased stretch (low complexity) spans 570-595 (GPSASAALSPPLGSSPSSPGSQSLSS). Residues 570–632 (GPSASAALSP…HHPPQSLNVG (63 aa)) are disordered.

Component of some SCF complex, composed of CUL1, SKP1, RBX1 and FBXO42. Interacts (via the kelch domain) with p53/TP53; interaction is direct.

In terms of biological role, substrate-recognition component of some SCF (SKP1-CUL1-F-box protein)-type E3 ubiquitin ligase complex. Specifically recognizes p53/TP53, promoting its ubiquitination and degradation. This Mus musculus (Mouse) protein is F-box only protein 42 (Fbxo42).